The following is a 547-amino-acid chain: Chaperonin GroEL (547 aa).

ATP-binding positions include threonine 30–proline 33, lysine 51, aspartate 87–threonine 91, glycine 415, asparagine 479–alanine 481, and aspartate 495.

The protein belongs to the chaperonin (HSP60) family. As to quaternary structure, forms a cylinder of 14 subunits composed of two heptameric rings stacked back-to-back. Interacts with the co-chaperonin GroES.

It is found in the cytoplasm. The enzyme catalyses ATP + H2O + a folded polypeptide = ADP + phosphate + an unfolded polypeptide.. Together with its co-chaperonin GroES, plays an essential role in assisting protein folding. The GroEL-GroES system forms a nano-cage that allows encapsulation of the non-native substrate proteins and provides a physical environment optimized to promote and accelerate protein folding. In Bordetella pertussis (strain Tohama I / ATCC BAA-589 / NCTC 13251), this protein is Chaperonin GroEL.